We begin with the raw amino-acid sequence, 1780 residues long: MSLRHRTVPPQTGRPLAAEAVGIEEEPYNIIPVNNLLADHPSLRFPEVRAAAAALKTVGDLRRPPYVQWRSHYDLLDWLALFFGFQKDNVRNQREHMVLHLANAQMRLSPPPDNIDSLDSAVVRRFRRKLLANYSSWCSYLGKKSNIWISDRNPDSRRELLYVGLYLLIWGEAANLRFMPECICYIFHNMASELNKILEDCLDENTGQPYLPSLSGENAFLTGVVKPIYDTIQAEIDESKNGTVAHCKWRNYDDINEYFWTDRCFSKLKWPLDLGSNFFKSRGKSVGKTGFVERRTFFYLYRSFDRLWVMLALFLQAAIIVAWEEKPDTSSVTRQLWNALKARDVQVRLLTVFLTWSGMRLLQAVLDAASQYPLVSRETKRHFFRMLMKVIAAAVWIVAFTVLYTNIWKQKRQDRQWSNAATTKIYQFLYAVGAFLVPEILALALFIIPWMRNFLEETNWKIFFALTWWFQGKSFVGRGLREGLVDNIKYSTFWIFVLATKFTFSYFLQVKPMIKPSKLLWNLKDVDYEWHQFYGDSNRFSVALLWLPVVLIYLMDIQIWYAIYSSIVGAVVGLFDHLGEIRDMGQLRLRFQFFASAIQFNLMPEEQLLNARGFGNKFKDGIHRLKLRYGFGRPFKKLESNQVEANKFALIWNEIILAFREEDIVSDREVELLELPKNSWDVTVIRWPCFLLCNELLLALSQARELIDAPDKWLWHKICKNEYRRCAVVEAYDSIKHLLLSIIKVDTEEHSIITVFFQIINQSIQSEQFTKTFRVDLLPKIYETLQKLVGLVNDEETDSGRVVNVLQSLYEIATRQFFIEKKTTEQLSNEGLTPRDPASKLLFQNAIRLPDASNEDFYRQVRRLHTILTSRDSMHSVPVNLEARRRIAFFSNSLFMNMPHAPQVEKMMAFSVLTPYYSEEVVYSKEQLRNETEDGISTLYYLQTIYADEWKNFKERMHREGIKTDSELWTTKLRDLRLWASYRGQTLARTVRGMMYYYRALKMLAFLDSASEMDIREGAQELGSVRNLQGELGGQSDGFVSENDRSSLSRASSSVSTLYKGHEYGTALMKFTYVVACQIYGSQKAKKEPQAEEILYLMKQNEALRIAYVDEVPAGRGETDYYSVLVKYDHQLEKEVEIFRVKLPGPVKLGEGKPENQNHAMIFTRGDAVQTIDMNQDSYFEEALKMRNLLQEYNHYHGIRKPTILGVREHIFTGSVSSLAWFMSAQETSFVTLGQRVLANPLKVRMHYGHPDVFDRFWFLSRGGISKASRVINISEDIFAGFNCTLRGGNVTHHEYIQVGKGRDVGLNQISMFEAKVASGNGEQVLSRDVYRLGHRLDFFRMLSFFYTTVGFFFNTMMVILTVYAFLWGRVYLALSGVEKSALADSTDTNAALGVILNQQFIIQLGLFTALPMIVEWSLEEGFLLAIWNFIRMQIQLSAVFYTFSMGTRAHYFGRTILHGGAKYRATGRGFVVEHKGFTENYRLYARSHFVKAIELGLILIVYASHSPIAKDSLIYIAMTITSWFLVISWIMAPFVFNPSGFDWLKTVYDFEDFMNWIWYQGRISTKSEQSWEKWWYEEQDHLRNTGKAGLFVEIILVLRFFFFQYGIVYQLKIANGSTSLFVYLFSWIYIFAIFVLFLVIQYARDKYSAKAHIRYRLVQFLLIVLAILVIVALLEFTHFSFIDIFTSLLAFIPTGWGILLIAQTQRKWLKNYTIFWNAVVSVARMYDILFGILIMVPVAFLSWMPGFQSMQTRILFNEAFSRGLRIMQIVTGKKSKGDV.

Over 1–302 (MSLRHRTVPP…ERRTFFYLYR (302 aa)) the chain is Cytoplasmic. A helical transmembrane segment spans residues 303–323 (SFDRLWVMLALFLQAAIIVAW). The Extracellular segment spans residues 324–348 (EEKPDTSSVTRQLWNALKARDVQVR). The chain crosses the membrane as a helical span at residues 349–369 (LLTVFLTWSGMRLLQAVLDAA). Residues 370–386 (SQYPLVSRETKRHFFRM) lie on the Cytoplasmic side of the membrane. A helical transmembrane segment spans residues 387–407 (LMKVIAAAVWIVAFTVLYTNI). The Extracellular segment spans residues 408–427 (WKQKRQDRQWSNAATTKIYQ). A helical transmembrane segment spans residues 428 to 448 (FLYAVGAFLVPEILALALFII). Over 449–489 (PWMRNFLEETNWKIFFALTWWFQGKSFVGRGLREGLVDNIK) the chain is Cytoplasmic. A helical membrane pass occupies residues 490–510 (YSTFWIFVLATKFTFSYFLQV). Topologically, residues 511-542 (KPMIKPSKLLWNLKDVDYEWHQFYGDSNRFSV) are extracellular. A helical membrane pass occupies residues 543–563 (ALLWLPVVLIYLMDIQIWYAI). The Cytoplasmic portion of the chain corresponds to 564-1348 (YSSIVGAVVG…FFRMLSFFYT (785 aa)). The helical transmembrane segment at 1349-1369 (TVGFFFNTMMVILTVYAFLWG) threads the bilayer. The Extracellular portion of the chain corresponds to 1370–1394 (RVYLALSGVEKSALADSTDTNAALG). Residues 1395-1415 (VILNQQFIIQLGLFTALPMIV) form a helical membrane-spanning segment. The Cytoplasmic segment spans residues 1416-1421 (EWSLEE). Residues 1422–1442 (GFLLAIWNFIRMQIQLSAVFY) form a helical membrane-spanning segment. The Extracellular segment spans residues 1443 to 1489 (TFSMGTRAHYFGRTILHGGAKYRATGRGFVVEHKGFTENYRLYARSH). The helical transmembrane segment at 1490–1510 (FVKAIELGLILIVYASHSPIA) threads the bilayer. Over 1511–1516 (KDSLIY) the chain is Cytoplasmic. The chain crosses the membrane as a helical span at residues 1517–1537 (IAMTITSWFLVISWIMAPFVF). The Extracellular segment spans residues 1538–1588 (NPSGFDWLKTVYDFEDFMNWIWYQGRISTKSEQSWEKWWYEEQDHLRNTGK). Residues 1589–1609 (AGLFVEIILVLRFFFFQYGIV) traverse the membrane as a helical segment. Residues 1610-1620 (YQLKIANGSTS) lie on the Cytoplasmic side of the membrane. The chain crosses the membrane as a helical span at residues 1621–1641 (LFVYLFSWIYIFAIFVLFLVI). At 1642–1657 (QYARDKYSAKAHIRYR) the chain is on the extracellular side. Residues 1658–1678 (LVQFLLIVLAILVIVALLEFT) form a helical membrane-spanning segment. The Cytoplasmic segment spans residues 1679–1681 (HFS). The chain crosses the membrane as a helical span at residues 1682–1702 (FIDIFTSLLAFIPTGWGILLI). Residues 1703–1728 (AQTQRKWLKNYTIFWNAVVSVARMYD) lie on the Extracellular side of the membrane. The N-linked (GlcNAc...) asparagine glycan is linked to Asn-1712. A helical membrane pass occupies residues 1729 to 1749 (ILFGILIMVPVAFLSWMPGFQ). The Cytoplasmic portion of the chain corresponds to 1750 to 1780 (SMQTRILFNEAFSRGLRIMQIVTGKKSKGDV).

Belongs to the glycosyltransferase 48 family. Highly expressed in flowers. Expressed at low levels in roots, leaves, stems, cauline leaves and siliques.

It is found in the cell membrane. It catalyses the reaction [(1-&gt;3)-beta-D-glucosyl](n) + UDP-alpha-D-glucose = [(1-&gt;3)-beta-D-glucosyl](n+1) + UDP + H(+). Its function is as follows. Involved in sporophytic and gametophytic development. Required for normal leaf development. During pollen formation, required for the formation of the callose wall separating the tetraspores of the tetrad (interstitial wall), but not for the callose wall surrounding the pollen mother cells (peripheral wall). Functionally redudant to CALS11 (GSL1). May play a role later in pollen grain maturation. Required for callose formation induced by wounding and pathogen attack. May interfere with salicylic acid-induced signaling pathway during defense response. During plant growth and development, callose is found as a transitory component of the cell plate in dividing cells, is a major component of pollen mother cell walls and pollen tubes, and is found as a structural component of plasmodesmatal canals. The protein is Callose synthase 12 (CALS12) of Arabidopsis thaliana (Mouse-ear cress).